The chain runs to 697 residues: Envelope glycoprotein G (697 aa).

Residues 1–22 (MHAIAPRLLLLFVLSGLPGTRG) form the signal peptide. Topologically, residues 23-648 (GSGVPGPINP…WFLTASPALD (626 aa)) are virion surface. N-linked (GlcNAc...) asparagine; by host glycosylation is found at Asn104 and Asn163. Disordered regions lie at residues 298-389 (HWAP…TTPP) and 402-630 (TPEE…PSGP). The span at 322-335 (LRTDPEGVDPDVRA) shows a compositional bias: basic and acidic residues. 2 stretches are compositionally biased toward low complexity: residues 375 to 389 (DPSA…TTPP) and 402 to 445 (TPEE…AKTP). An N-linked (GlcNAc...) asparagine; by host glycan is attached at Asn435. 2 stretches are compositionally biased toward pro residues: residues 446–457 (PTTPAPTTPPPT) and 465–480 (PTTP…PATP). A compositionally biased stretch (low complexity) spans 481–529 (GPVGASAAPTADSPLTALPPATAPGPSAANVSVAATTATPGTRGTARTP). Asn510 is a glycosylation site (N-linked (GlcNAc...) asparagine; by host). A compositionally biased stretch (pro residues) spans 542–552 (DAPPGSPAPPP). The span at 560-576 (EEFEGAGDGEPPEDDDS) shows a compositional bias: acidic residues. Over residues 587-603 (PNKPPPARPGPIRPTLP) the composition is skewed to pro residues. Residues 649–669 (ILFIISTTIHTAAFVCLVALA) traverse the membrane as a helical segment. At 670 to 697 (AQLWRGRAGRRRYAHPSVRYVCLPPERD) the chain is on the intravirion side.

It belongs to the alphaherpesvirinae glycoprotein G family.

The protein localises to the virion membrane. Chemokine-binding protein that inhibits neutrophils' chemotaxis. The polypeptide is Envelope glycoprotein G (gG) (Homo sapiens (Human)).